The sequence spans 1011 residues: Histone deacetylase 9 (1011 aa).

Serine 22 bears the Phosphoserine mark. The interval 23 to 27 (PLDLR) is interaction with CTBP1. Disordered regions lie at residues 110 to 139 (RQEQ…RAVA), 183 to 249 (TSLD…KDGN), and 262 to 304 (TESS…EQMV). The tract at residues 136-154 (RAVASTEVKQKLQEFLLSK) is interaction with MEF2. The interval 175–343 (LWYTAAHHTS…LPAVPSQLNA (169 aa)) is interaction with MAPK10. Over residues 185–199 (LDQSSPPLSGTSPSY) the composition is skewed to polar residues. The span at 208 to 219 (DAKDDFPLRKTA) shows a compositional bias: basic and acidic residues. Residues 218–261 (TASEPNLKVRSRLKQKVAERRSSPLLRRKDGNVVTSFKKRMFEV) form an interaction with ETV6 region. Serine 220 and serine 240 each carry phosphoserine. Over residues 233-248 (KVAERRSSPLLRRKDG) the composition is skewed to basic and acidic residues. The span at 262 to 285 (TESSVSSSSPGSGPSSPNNGPTGS) shows a compositional bias: low complexity. Serine 451 is modified (phosphoserine). A disordered region spans residues 494–536 (QLKQPGSHLEEAEEELQGDQAMQEDRAPSSGNSTRSDSSACVD). Residues 522-532 (SSGNSTRSDSS) show a composition bias toward polar residues. Phosphoserine is present on serine 554. Residues 631–978 (SATGIAYDPL…VNALLGNELE (348 aa)) form a histone deacetylase region. Cysteine 646, cysteine 648, histidine 654, and cysteine 731 together coordinate Zn(2+). Residue histidine 783 is part of the active site.

Belongs to the histone deacetylase family. HD type 2 subfamily. Homodimer. Interacts with CTBP1. The phosphorylated form interacts with 14-3-3. Interacts with HDAC1 and HDAC3, and probably with HDAC4 and HDAC5. Interacts with MEF2, MAPK10, ETV6, NCOR1 and BCL6. Interacts with FOXP3 in the absence of T-cell stimulation. Phosphorylated on Ser-220 and Ser-450; which promotes 14-3-3-binding, impairs interaction with MEF2, and antagonizes antimyogenic activity. Phosphorylated on Ser-240; which impairs nuclear accumulation. Isoform 7 is phosphorylated on Tyr-1010. Phosphorylated by the PKC kinases PKN1 and PKN2, impairing nuclear import. In terms of processing, sumoylated. In terms of tissue distribution, broadly expressed, with highest levels in brain, heart, muscle and testis. Isoform 3 is present in human bladder carcinoma cells (at protein level).

The protein localises to the nucleus. It carries out the reaction N(6)-acetyl-L-lysyl-[histone] + H2O = L-lysyl-[histone] + acetate. Its activity is regulated as follows. Inhibited by Trichostatin A (TSA) and suberoylanilide hydroxamic acid. Its function is as follows. Responsible for the deacetylation of lysine residues on the N-terminal part of the core histones (H2A, H2B, H3 and H4). Histone deacetylation gives a tag for epigenetic repression and plays an important role in transcriptional regulation, cell cycle progression and developmental events. Represses MEF2-dependent transcription. Isoform 3 lacks active site residues and therefore is catalytically inactive. Represses MEF2-dependent transcription by recruiting HDAC1 and/or HDAC3. Seems to inhibit skeletal myogenesis and to be involved in heart development. Protects neurons from apoptosis, both by inhibiting JUN phosphorylation by MAPK10 and by repressing JUN transcription via HDAC1 recruitment to JUN promoter. The sequence is that of Histone deacetylase 9 (HDAC9) from Homo sapiens (Human).